An 86-amino-acid chain; its full sequence is Exodeoxyribonuclease 7 small subunit (86 aa).

The interval M1–S26 is disordered.

Belongs to the XseB family. As to quaternary structure, heterooligomer composed of large and small subunits.

The protein resides in the cytoplasm. The enzyme catalyses Exonucleolytic cleavage in either 5'- to 3'- or 3'- to 5'-direction to yield nucleoside 5'-phosphates.. Its function is as follows. Bidirectionally degrades single-stranded DNA into large acid-insoluble oligonucleotides, which are then degraded further into small acid-soluble oligonucleotides. The sequence is that of Exodeoxyribonuclease 7 small subunit from Helicobacter pylori (strain ATCC 700392 / 26695) (Campylobacter pylori).